The sequence spans 607 residues: Elongation factor 4 (607 aa).

The 183-residue stretch at 11–193 folds into the tr-type G domain; the sequence is EKIRNFSIIA…QIVEKVPAPQ (183 aa). Residues 23 to 28 and 140 to 143 contribute to the GTP site; these read DHGKST and NKID.

This sequence belongs to the TRAFAC class translation factor GTPase superfamily. Classic translation factor GTPase family. LepA subfamily.

It is found in the cell membrane. It catalyses the reaction GTP + H2O = GDP + phosphate + H(+). Functionally, required for accurate and efficient protein synthesis under certain stress conditions. May act as a fidelity factor of the translation reaction, by catalyzing a one-codon backward translocation of tRNAs on improperly translocated ribosomes. Back-translocation proceeds from a post-translocation (POST) complex to a pre-translocation (PRE) complex, thus giving elongation factor G a second chance to translocate the tRNAs correctly. Binds to ribosomes in a GTP-dependent manner. The sequence is that of Elongation factor 4 from Lactococcus lactis subsp. cremoris (strain SK11).